Consider the following 515-residue polypeptide: Proline--tRNA ligase (515 aa).

It belongs to the class-II aminoacyl-tRNA synthetase family. ProS type 3 subfamily. In terms of assembly, homodimer.

The protein resides in the cytoplasm. The enzyme catalyses tRNA(Pro) + L-proline + ATP = L-prolyl-tRNA(Pro) + AMP + diphosphate. In terms of biological role, catalyzes the attachment of proline to tRNA(Pro) in a two-step reaction: proline is first activated by ATP to form Pro-AMP and then transferred to the acceptor end of tRNA(Pro). In Novosphingobium aromaticivorans (strain ATCC 700278 / DSM 12444 / CCUG 56034 / CIP 105152 / NBRC 16084 / F199), this protein is Proline--tRNA ligase.